Reading from the N-terminus, the 396-residue chain is MSKEKFERKKPHINVGTIGHVDHGKTTLTAALTKVLAEAHGGDARAFDQIDNAPEERARGITIATAHVEYESESRHYAHVDCPGHADYVKNMITGAAQMDGSILVVSAADGPMPQTREHILLARQVGVPAIVVFLNKADMVDDAELLELVEMEVRELLSDYDFDGDNIPVVTGSALKALEGDDSEMGRPAIIKLVEAMDAHIPQPERPVDGDFLMPIEDVFSISGRGTVVTGRVERGVIKVGEEVEIVGITDTRKTTCTGVEMFRKLLDQGEAGDNIGALLRGIKRDDVERGQVLCKPKSITPHTHFEAEVYVLSKDEGGRHTPFFNGYRPQFYFRTTDVTGTVTLPEGTEMVMPGDNVKMTVQLIAPIAMEDGLRFAIREGGRTVGAGVVSKIIE.

In terms of domain architecture, tr-type G spans 10–206 (KPHINVGTIG…AMDAHIPQPE (197 aa)). A G1 region spans residues 19-26 (GHVDHGKT). 19–26 (GHVDHGKT) contributes to the GTP binding site. Thr-26 is a Mg(2+) binding site. A G2 region spans residues 60-64 (GITIA). Residues 81–84 (DCPG) form a G3 region. GTP-binding positions include 81–85 (DCPGH) and 136–139 (NKAD). Residues 136-139 (NKAD) form a G4 region. The interval 174 to 176 (SAL) is G5.

Belongs to the TRAFAC class translation factor GTPase superfamily. Classic translation factor GTPase family. EF-Tu/EF-1A subfamily. As to quaternary structure, monomer.

The protein localises to the cytoplasm. It carries out the reaction GTP + H2O = GDP + phosphate + H(+). GTP hydrolase that promotes the GTP-dependent binding of aminoacyl-tRNA to the A-site of ribosomes during protein biosynthesis. The sequence is that of Elongation factor Tu 1 from Halorhodospira halophila (strain DSM 244 / SL1) (Ectothiorhodospira halophila (strain DSM 244 / SL1)).